Reading from the N-terminus, the 122-residue chain is Large ribosomal subunit protein uL18 (122 aa).

This sequence belongs to the universal ribosomal protein uL18 family. As to quaternary structure, part of the 50S ribosomal subunit; part of the 5S rRNA/L5/L18/L25 subcomplex. Contacts the 5S and 23S rRNAs.

This is one of the proteins that bind and probably mediate the attachment of the 5S RNA into the large ribosomal subunit, where it forms part of the central protuberance. The sequence is that of Large ribosomal subunit protein uL18 from Agathobacter rectalis (strain ATCC 33656 / DSM 3377 / JCM 17463 / KCTC 5835 / VPI 0990) (Eubacterium rectale).